Consider the following 258-residue polypeptide: Imidazole glycerol phosphate synthase subunit HisF (258 aa).

Active-site residues include Asp12 and Asp131.

It belongs to the HisA/HisF family. As to quaternary structure, heterodimer of HisH and HisF.

The protein localises to the cytoplasm. The catalysed reaction is 5-[(5-phospho-1-deoxy-D-ribulos-1-ylimino)methylamino]-1-(5-phospho-beta-D-ribosyl)imidazole-4-carboxamide + L-glutamine = D-erythro-1-(imidazol-4-yl)glycerol 3-phosphate + 5-amino-1-(5-phospho-beta-D-ribosyl)imidazole-4-carboxamide + L-glutamate + H(+). It functions in the pathway amino-acid biosynthesis; L-histidine biosynthesis; L-histidine from 5-phospho-alpha-D-ribose 1-diphosphate: step 5/9. Functionally, IGPS catalyzes the conversion of PRFAR and glutamine to IGP, AICAR and glutamate. The HisF subunit catalyzes the cyclization activity that produces IGP and AICAR from PRFAR using the ammonia provided by the HisH subunit. This is Imidazole glycerol phosphate synthase subunit HisF from Corynebacterium diphtheriae (strain ATCC 700971 / NCTC 13129 / Biotype gravis).